A 117-amino-acid polypeptide reads, in one-letter code: Large ribosomal subunit protein bL19 (117 aa).

The protein belongs to the bacterial ribosomal protein bL19 family.

This protein is located at the 30S-50S ribosomal subunit interface and may play a role in the structure and function of the aminoacyl-tRNA binding site. This Halorhodospira halophila (strain DSM 244 / SL1) (Ectothiorhodospira halophila (strain DSM 244 / SL1)) protein is Large ribosomal subunit protein bL19.